The following is a 461-amino-acid chain: B3 domain-containing protein REM9 (461 aa).

Positions 11-103 (NQHFFQPLLP…VFHVTALGPS (93 aa)) form a DNA-binding region, TF-B3 1. Positions 110-146 (PQSSRHEEGEESGENEISEKEGEENVQKESDKSSSDL) are disordered. Residues 126-143 (ISEKEGEENVQKESDKSS) show a composition bias toward basic and acidic residues. 2 DNA-binding regions (TF-B3) span residues 148–244 (CFSQ…CSRT) and 230–332 (LQKA…EQPS). Residues 333 to 415 (FKAEDGRHKR…SGIEGNLQHT (83 aa)) form a disordered region. The segment covering 384-394 (PKVEIREKIAE) has biased composition (basic and acidic residues). A compositionally biased stretch (polar residues) spans 400–415 (RASNKSSGIEGNLQHT).

It is found in the nucleus. The protein is B3 domain-containing protein REM9 (REM9) of Arabidopsis thaliana (Mouse-ear cress).